The following is a 646-amino-acid chain: DNA mismatch repair protein MutL (646 aa).

2 disordered regions span residues 356–380 and 415–452; these read FENR…NENS and TKNS…AKPH. Residues 424–436 show a composition bias toward low complexity; that stretch reads SEATSNEAASAEI.

It belongs to the DNA mismatch repair MutL/HexB family.

In terms of biological role, this protein is involved in the repair of mismatches in DNA. It is required for dam-dependent methyl-directed DNA mismatch repair. May act as a 'molecular matchmaker', a protein that promotes the formation of a stable complex between two or more DNA-binding proteins in an ATP-dependent manner without itself being part of a final effector complex. This chain is DNA mismatch repair protein MutL, found in Staphylococcus carnosus (strain TM300).